Consider the following 440-residue polypeptide: Beta-1,3-galactosyl-O-glycosyl-glycoprotein beta-1,6-N-acetylglucosaminyltransferase 3 (440 aa).

Over 1-12 the chain is Cytoplasmic; that stretch reads MKMTGWKKKLCR. The chain crosses the membrane as a helical; Signal-anchor for type II membrane protein span at residues 13–30; it reads GHHLWALGCYMLLAVVAL. At 31-440 the chain is on the lumenal side; the sequence is RLSLRLKCDV…RHKAIYGTEL (410 aa). N72 and N108 each carry an N-linked (GlcNAc...) asparagine glycan. Disulfide bonds link C73-C230, C164-C384, C185-C212, and C393-C425.

This sequence belongs to the glycosyltransferase 14 family. Post-translationally, N-glycosylated. As to expression, primarily expressed in mucus-secreting tissues.

The protein localises to the golgi apparatus membrane. It carries out the reaction a 3-O-[beta-D-galactosyl-(1-&gt;3)-N-acetyl-alpha-D-galactosaminyl]-L-seryl-[protein] + UDP-N-acetyl-alpha-D-glucosamine = 3-O-{beta-D-galactosyl-(1-&gt;3)-[N-acetyl-beta-D-glucosaminyl-(1-&gt;6)]-N-acetyl-alpha-D-galactosaminyl}-L-seryl-[protein] + UDP + H(+). It catalyses the reaction a 3-O-[beta-D-galactosyl-(1-&gt;3)-N-acetyl-alpha-D-galactosaminyl]-L-threonyl-[protein] + UDP-N-acetyl-alpha-D-glucosamine = a 3-O-{beta-D-galactosyl-(1-&gt;3)-[N-acetyl-beta-D-glucosaminyl-(1-&gt;6)]-N-acetyl-alpha-D-galactosaminyl}-L-threonyl-[protein] + UDP + H(+). The enzyme catalyses a beta-D-Gal-(1-&gt;4)-beta-D-GlcNAc-(1-&gt;3)-beta-D-Gal-(1-&gt;4)-beta-D-GlcNAc derivative + UDP-N-acetyl-alpha-D-glucosamine = a beta-D-Gal-(1-&gt;4)-beta-D-GlcNAc-(1-&gt;3)-[beta-D-GlcNAc-(1-&gt;6)]-beta-D-Gal-(1-&gt;4)-N-acetyl-beta-D-glucosaminyl derivative + UDP + H(+). The catalysed reaction is 3-O-[N-acetyl-beta-D-glucosaminyl-(1-&gt;3)-N-acetyl-alpha-D-galactosaminyl]-L-seryl-[protein] + UDP-N-acetyl-alpha-D-glucosamine = 3-O-[N-acetyl-beta-D-glucosaminyl-(1-&gt;3)-[N-acetyl-beta-D-glucosaminyl-(1-&gt;6)]-N-acetyl-alpha-D-galactosaminyl]-L-seryl-[protein] + UDP + H(+). It carries out the reaction a 3-O-[N-acetyl-beta-D-glucosaminyl-(1-&gt;3)-N-acetyl-alpha-D-galactosaminyl]-L-threonyl-[protein] + UDP-N-acetyl-alpha-D-glucosamine = 3-O-[N-acetyl-beta-D-glucosaminyl-(1-&gt;3)-[N-acetyl-beta-D-glucosaminyl-(1-&gt;6)]-N-acetyl-alpha-D-galactosaminyl]-L-threonyl-[protein] + UDP + H(+). Its pathway is protein modification; protein glycosylation. In terms of biological role, glycosyltransferase that can synthesize all known mucin beta 6 N-acetylglucosaminides. Mediates core 2 and core 4 O-glycan branching, 2 important steps in mucin-type biosynthesis. Also has I-branching enzyme activity by converting linear into branched poly-N-acetyllactosaminoglycans, leading to introduce the blood group I antigen during embryonic development. The chain is Beta-1,3-galactosyl-O-glycosyl-glycoprotein beta-1,6-N-acetylglucosaminyltransferase 3 (GCNT3) from Bos taurus (Bovine).